The primary structure comprises 300 residues: Ubiquinone biosynthesis protein COQ4, mitochondrial (300 aa).

Histidine 173, aspartate 174, histidine 177, and glutamate 189 together coordinate Zn(2+).

It belongs to the COQ4 family. Component of a multi-subunit COQ enzyme complex, composed of at least COQ3, COQ4, COQ5, COQ6, COQ7 and COQ9. Zn(2+) is required as a cofactor.

It is found in the mitochondrion inner membrane. It catalyses the reaction a 4-hydroxy-3-methoxy-5-(all-trans-polyprenyl)benzoate + H(+) = a 2-methoxy-6-(all-trans-polyprenyl)phenol + CO2. The protein operates within cofactor biosynthesis; ubiquinone biosynthesis. Lyase that catalyzes the C1-decarboxylation of 4-hydroxy-3-methoxy-5-(all-trans-polyprenyl)benzoic acid into 2-methoxy-6-(all-trans-polyprenyl)phenol during ubiquinone biosynthesis. The sequence is that of Ubiquinone biosynthesis protein COQ4, mitochondrial from Cryptococcus neoformans var. neoformans serotype D (strain JEC21 / ATCC MYA-565) (Filobasidiella neoformans).